The primary structure comprises 219 residues: Cytidylate kinase (219 aa).

21–29 lines the ATP pocket; it reads GPAASGKGT.

The protein belongs to the cytidylate kinase family. Type 1 subfamily.

The protein localises to the cytoplasm. It catalyses the reaction CMP + ATP = CDP + ADP. The enzyme catalyses dCMP + ATP = dCDP + ADP. In Rickettsia rickettsii (strain Iowa), this protein is Cytidylate kinase.